The chain runs to 365 residues: Membrane-bound lytic murein transglycosylase C (365 aa).

The signal sequence occupies residues 1 to 19 (MKKYTKYLPLLLIIPFLAA). C20 carries the N-palmitoyl cysteine lipid modification. C20 carries S-diacylglycerol cysteine lipidation.

Belongs to the transglycosylase Slt family.

The protein resides in the cell outer membrane. The enzyme catalyses Exolytic cleavage of the (1-&gt;4)-beta-glycosidic linkage between N-acetylmuramic acid (MurNAc) and N-acetylglucosamine (GlcNAc) residues in peptidoglycan, from either the reducing or the non-reducing ends of the peptidoglycan chains, with concomitant formation of a 1,6-anhydrobond in the MurNAc residue.. In terms of biological role, murein-degrading enzyme. May play a role in recycling of muropeptides during cell elongation and/or cell division. This is Membrane-bound lytic murein transglycosylase C from Actinobacillus pleuropneumoniae serotype 5b (strain L20).